Consider the following 1169-residue polypeptide: Chromosome partition protein Smc (1169 aa).

ATP is bound at residue 32–39 (PNGSGKSN). Positions 166–507 (DEISGIAEFD…RIKALKEMEE (342 aa)) form a coiled coil. The SMC hinge domain maps to 523 to 636 (PGIIDIVGNL…ENIDIAKELA (114 aa)). Residues 676 to 1030 (SKLNKIADEI…NKKKEVFMEV (355 aa)) are a coiled coil.

The protein belongs to the SMC family. As to quaternary structure, homodimer.

The protein resides in the cytoplasm. Required for chromosome condensation and partitioning. The sequence is that of Chromosome partition protein Smc from Methanocaldococcus jannaschii (strain ATCC 43067 / DSM 2661 / JAL-1 / JCM 10045 / NBRC 100440) (Methanococcus jannaschii).